The chain runs to 274 residues: Ribosomal RNA small subunit methyltransferase A (274 aa).

S-adenosyl-L-methionine-binding residues include Asn-20, Leu-22, Gly-47, Glu-68, Asp-90, and Asn-110.

The protein belongs to the class I-like SAM-binding methyltransferase superfamily. rRNA adenine N(6)-methyltransferase family. RsmA subfamily.

It localises to the cytoplasm. The enzyme catalyses adenosine(1518)/adenosine(1519) in 16S rRNA + 4 S-adenosyl-L-methionine = N(6)-dimethyladenosine(1518)/N(6)-dimethyladenosine(1519) in 16S rRNA + 4 S-adenosyl-L-homocysteine + 4 H(+). Its function is as follows. Specifically dimethylates two adjacent adenosines (A1518 and A1519) in the loop of a conserved hairpin near the 3'-end of 16S rRNA in the 30S particle. May play a critical role in biogenesis of 30S subunits. The sequence is that of Ribosomal RNA small subunit methyltransferase A from Chlorobaculum parvum (strain DSM 263 / NCIMB 8327) (Chlorobium vibrioforme subsp. thiosulfatophilum).